Here is a 70-residue protein sequence, read N- to C-terminus: DNA-directed RNA polymerase subunit omega (70 aa).

Belongs to the RNA polymerase subunit omega family. As to quaternary structure, the RNAP catalytic core consists of 2 alpha, 1 beta, 1 beta' and 1 omega subunit. When a sigma factor is associated with the core the holoenzyme is formed, which can initiate transcription.

The catalysed reaction is RNA(n) + a ribonucleoside 5'-triphosphate = RNA(n+1) + diphosphate. Promotes RNA polymerase assembly. Latches the N- and C-terminal regions of the beta' subunit thereby facilitating its interaction with the beta and alpha subunits. The sequence is that of DNA-directed RNA polymerase subunit omega from Bacillus cereus (strain G9842).